We begin with the raw amino-acid sequence, 416 residues long: Multifunctional CCA protein (416 aa).

2 residues coordinate ATP: Gly-8 and Arg-11. Residues Gly-8 and Arg-11 each contribute to the CTP site. Residues Asp-21 and Asp-23 each contribute to the Mg(2+) site. The ATP site is built by Arg-91, Arg-137, and Arg-140. Positions 91, 137, and 140 each coordinate CTP. The region spanning 228–329 is the HD domain; sequence TGVHTLMVLA…VKIFDKADFW (102 aa).

The protein belongs to the tRNA nucleotidyltransferase/poly(A) polymerase family. Bacterial CCA-adding enzyme type 1 subfamily. Monomer. Can also form homodimers and oligomers. Mg(2+) serves as cofactor. The cofactor is Ni(2+).

It catalyses the reaction a tRNA precursor + 2 CTP + ATP = a tRNA with a 3' CCA end + 3 diphosphate. The catalysed reaction is a tRNA with a 3' CCA end + 2 CTP + ATP = a tRNA with a 3' CCACCA end + 3 diphosphate. Catalyzes the addition and repair of the essential 3'-terminal CCA sequence in tRNAs without using a nucleic acid template. Adds these three nucleotides in the order of C, C, and A to the tRNA nucleotide-73, using CTP and ATP as substrates and producing inorganic pyrophosphate. tRNA 3'-terminal CCA addition is required both for tRNA processing and repair. Also involved in tRNA surveillance by mediating tandem CCA addition to generate a CCACCA at the 3' terminus of unstable tRNAs. While stable tRNAs receive only 3'-terminal CCA, unstable tRNAs are marked with CCACCA and rapidly degraded. The chain is Multifunctional CCA protein from Shewanella baltica (strain OS155 / ATCC BAA-1091).